Here is a 91-residue protein sequence, read N- to C-terminus: MTKGTQAFGKKHVKSHTLCKRCGKSSFHIQKKRCASCGYQDAKKRTYNWGAKSIRRRTTGTGRTRHLRDVNARFRNGFRGTTPKPRAQPTN.

Zn(2+)-binding residues include C19, C22, C34, and C37. The segment at 19–37 adopts a C4-type zinc-finger fold; it reads CKRCGKSSFHIQKKRCASC.

It belongs to the eukaryotic ribosomal protein eL37 family. The cofactor is Zn(2+).

In terms of biological role, binds to the 23S rRNA. The sequence is that of Large ribosomal subunit protein eL37 from Caenorhabditis elegans.